A 260-amino-acid chain; its full sequence is Dehydrogenase/reductase SDR family member 4 (260 aa).

18–42 lines the NADP(+) pocket; it reads IVTASTDGIGLAIARRLAQDGAHVV. Lys-74 carries the N6-acetyllysine; alternate modification. Lys-74 is subject to N6-succinyllysine; alternate. Ser-151 serves as a coordination point for substrate. Tyr-164 functions as the Proton acceptor in the catalytic mechanism. Lys-168 provides a ligand contact to NADP(+). Lys-198 is modified (N6-acetyllysine; alternate). Lys-198 carries the N6-succinyllysine; alternate modification. Residue Ser-202 is modified to Phosphoserine. Lys-209 carries the N6-succinyllysine modification. Residues 258 to 260 carry the Peroxisomal targeting signal motif; that stretch reads SRL.

This sequence belongs to the short-chain dehydrogenases/reductases (SDR) family. Homotetramer. As to expression, detected in liver and kidney. Detected at lower levels in heart, lung, spleen, small intestine, testis, brain and stomach.

Its subcellular location is the peroxisome. The catalysed reaction is a secondary alcohol + NADP(+) = a ketone + NADPH + H(+). The enzyme catalyses 3alpha-hydroxy-5beta-pregnan-20-one + NADP(+) = 5beta-pregnan-3,20-dione + NADPH + H(+). It carries out the reaction 5beta-dihydrotestosterone + NADPH + H(+) = 5beta-androstane-3alpha,17beta-diol + NADP(+). It catalyses the reaction all-trans-retinol + NADP(+) = all-trans-retinal + NADPH + H(+). The catalysed reaction is isatin + NADPH + H(+) = 3-hydroxyindolin-2-one + NADP(+). With respect to regulation, inhibited by flavonoids (kaempferol, quercetin, quercitrin, genistein), myristic acid, pyrazole, barbital, phenobarbital and CuSO4. NADPH-dependent oxidoreductase which catalyzes the reduction of a variety of compounds bearing carbonyl groups including ketosteroids, alpha-dicarbonyl compounds, aldehydes, aromatic ketones and quinones. Reduces all-trans-retinal and 9-cis retinal. Reduces 3-ketosteroids and benzil into 3alpha-hydroxysteroids and S-benzoin, respectively, in contrast to the stereoselectivity of primates DHRS4s which produce 3beta-hydroxysteroids and R-benzoin. In the reverse reaction, catalyze the NADP-dependent oxidation of 3alpha-hydroxysteroids and alcohol, but with much lower efficiency. Involved in the metabolism of 3alpha-hydroxysteroids, retinoid, isatin and xenobiotic carbonyl compounds. In Oryctolagus cuniculus (Rabbit), this protein is Dehydrogenase/reductase SDR family member 4 (DHRS4).